A 292-amino-acid polypeptide reads, in one-letter code: Acetylglutamate kinase (292 aa).

Residues 64–65 (GG), Arg86, and Asn190 each bind substrate.

It belongs to the acetylglutamate kinase family. ArgB subfamily.

The protein localises to the cytoplasm. The enzyme catalyses N-acetyl-L-glutamate + ATP = N-acetyl-L-glutamyl 5-phosphate + ADP. The protein operates within amino-acid biosynthesis; L-arginine biosynthesis; N(2)-acetyl-L-ornithine from L-glutamate: step 2/4. Its function is as follows. Catalyzes the ATP-dependent phosphorylation of N-acetyl-L-glutamate. The polypeptide is Acetylglutamate kinase (Pelobacter propionicus (strain DSM 2379 / NBRC 103807 / OttBd1)).